The primary structure comprises 410 residues: Lissencephaly-1 homolog (410 aa).

In terms of domain architecture, LisH spans 7-39 (QRDELNRAIADYLRSNGYEEAYSVFKKEAELDM). The stretch at 56–82 (TSVIRLQKKVMELESKLNEAKEEFTSG) forms a coiled coil. WD repeat units follow at residues 106-147 (GHRS…RTLK), 148-187 (GHTDSVQDISFDHSGKLLASCSADMTIKLWDFQGFECIRT), 190-229 (GHDHNVSSVAIMPNGDHIVSASRDKTIKMWEVQTGYCVKT), 232-271 (GHREWVRMVRPNQDGTLIASCSNDQTVRVWVVATKECKAE), 274-333 (EHEH…CLMT), 336-377 (GHDN…KTLN), and 379-410 (HEHFVTSLDFHKTAPYVVTGSVDQTVKVWECR).

Belongs to the WD repeat LIS1/nudF family. Can self-associate. Component of the cytosolic PAF-AH (I) heterotetrameric enzyme, which is composed of PAFAH1B1 (beta), PAFAH1B2 (alpha2) and PAFAH1B3 (alpha1) subunits. The catalytic activity of the enzyme resides in the alpha1 (PAFAH1B3) and alpha2 (PAFAH1B2) subunits, whereas the beta subunit (PAFAH1B1) has regulatory activity. Trimer formation is not essential for the catalytic activity. Interacts with dynein, dynactin, nde1 and ndel1.

Its subcellular location is the cytoplasm. It localises to the cytoskeleton. It is found in the microtubule organizing center. The protein resides in the centrosome. Regulatory subunit (beta subunit) of the cytosolic type I platelet-activating factor (PAF) acetylhydrolase (PAF-AH (I)), an enzyme that catalyzes the hydrolyze of the acetyl group at the sn-2 position of PAF and its analogs and participates in the PAF inactivation. Positively regulates the activity of the minus-end directed microtubule motor protein dynein. May enhance dynein-mediated microtubule sliding by targeting dynein to the microtubule plus end. Required for several dynein- and microtubule-dependent processes such as the maintenance of Golgi integrity, the peripheral transport of microtubule fragments and the coupling of the nucleus and centrosome. May be required for proliferation of neuronal precursors and neuronal migration. This Xenopus tropicalis (Western clawed frog) protein is Lissencephaly-1 homolog (pafah1b1).